A 341-amino-acid polypeptide reads, in one-letter code: MRIGVLTAGGDCPGLNAVIRSVVHRAVDNYGDEVIGFEDGYAGLLDGRYRALDLNAVSGILARGGTILGSSRLERDRLREACENAGDMIQNFGIDALIPIGGEGTLTAARMLSDAGLPVVGVPKTIDNDISSTDRTFGFDTAVGVATEAMDRLKTTAESHQRVMVVEVMGRHAGWIALESGMAAGAHGICLPERPFDPADLVKMVEERFSRGKKFAVVCVAEGAHPAEGSMDYGKGAIDKFGHERFQGIGTALAFELERRLGKEAKPVILGHVQRGGVPTAYDRVLATRFGWHAVEAAHRGDFGRMTALRGTDVVMVPLAEAVTELKTVPKDRMDEAESVF.

Residues Gly-10, 72-73 (RL), and 102-105 (GEGT) each bind ATP. Glu-103 lines the Mg(2+) pocket. Substrate is bound by residues 125 to 127 (TID), Arg-162, 169 to 171 (MGR), Glu-222, Lys-266, and 272 to 275 (HVQR). The active-site Proton acceptor is Asp-127.

The protein belongs to the phosphofructokinase type A (PFKA) family. Mixed-substrate PFK group III subfamily. In terms of assembly, homodimer or homotetramer. Mg(2+) is required as a cofactor.

The protein resides in the cytoplasm. The catalysed reaction is beta-D-fructose 6-phosphate + ATP = beta-D-fructose 1,6-bisphosphate + ADP + H(+). The protein operates within carbohydrate degradation; glycolysis; D-glyceraldehyde 3-phosphate and glycerone phosphate from D-glucose: step 3/4. Allosterically inhibited by phosphoenolpyruvate. In terms of biological role, catalyzes the phosphorylation of D-fructose 6-phosphate to fructose 1,6-bisphosphate by ATP, the first committing step of glycolysis. The sequence is that of ATP-dependent 6-phosphofructokinase 2 from Streptomyces coelicolor (strain ATCC BAA-471 / A3(2) / M145).